The sequence spans 467 residues: Pup--protein ligase (467 aa).

E12 serves as a coordination point for Mg(2+). R56 serves as a coordination point for ATP. Position 58 (Y58) interacts with Mg(2+). Catalysis depends on D60, which acts as the Proton acceptor. E66 is a Mg(2+) binding site. The ATP site is built by T69 and W431.

This sequence belongs to the Pup ligase/Pup deamidase family. Pup-conjugating enzyme subfamily.

It carries out the reaction ATP + [prokaryotic ubiquitin-like protein]-L-glutamate + [protein]-L-lysine = ADP + phosphate + N(6)-([prokaryotic ubiquitin-like protein]-gamma-L-glutamyl)-[protein]-L-lysine.. It functions in the pathway protein degradation; proteasomal Pup-dependent pathway. It participates in protein modification; protein pupylation. Its function is as follows. Catalyzes the covalent attachment of the prokaryotic ubiquitin-like protein modifier Pup to the proteasomal substrate proteins, thereby targeting them for proteasomal degradation. This tagging system is termed pupylation. The ligation reaction involves the side-chain carboxylate of the C-terminal glutamate of Pup and the side-chain amino group of a substrate lysine. This Corynebacterium jeikeium (strain K411) protein is Pup--protein ligase.